We begin with the raw amino-acid sequence, 85 residues long: Large ribosomal subunit protein bL27 (85 aa).

The disordered stretch occupies residues 1–22 (MAHKKAGGSTNNGRDSESKRLG).

Belongs to the bacterial ribosomal protein bL27 family.

In Vibrio atlanticus (strain LGP32) (Vibrio splendidus (strain Mel32)), this protein is Large ribosomal subunit protein bL27.